Here is a 402-residue protein sequence, read N- to C-terminus: MAT+ sexual cell fertilization-promoting factor (402 aa).

The segment at residues 169-237 is a DNA-binding region (HMG box); it reads IPRPPNAYIL…KLMSAHPHYR (69 aa). Residues 246 to 272 form a disordered region; the sequence is IRRRAPRRNRAQEVANASPIGENSGAP.

It is found in the nucleus. In terms of biological role, controls fertilization, probably by determining the mating type. In Podospora anserina (Pleurage anserina), this protein is MAT+ sexual cell fertilization-promoting factor (FPR1).